A 232-amino-acid polypeptide reads, in one-letter code: MKLSPIIVALDYSNPKKAISFSKKISPDQCQLKIGHELFINSGFFLINFLQKNGFKIFLDLKLYDIPNTIKKTIFSLAKFGIWMVNVHASGGYNMMTAAKDALSHINNPPKLIAVTVLTSMEKSDLSKSKIFTKIINHVIHLSNNAYKCGLDGIVCSPWEAEKVRKKFGNNFIIVTPGIRFKNTNYNDQKRVMNPYDAIKSGSNYIVIGRPITKSSNPYLLLEKILSKLNNI.

Residues aspartate 11, lysine 33, 60-69 (DLKLYDIPNT), threonine 119, arginine 180, glutamine 189, glycine 209, and arginine 210 contribute to the substrate site. The Proton donor role is filled by lysine 62.

The protein belongs to the OMP decarboxylase family. Type 1 subfamily. As to quaternary structure, homodimer.

It catalyses the reaction orotidine 5'-phosphate + H(+) = UMP + CO2. It functions in the pathway pyrimidine metabolism; UMP biosynthesis via de novo pathway; UMP from orotate: step 2/2. In terms of biological role, catalyzes the decarboxylation of orotidine 5'-monophosphate (OMP) to uridine 5'-monophosphate (UMP). The chain is Orotidine 5'-phosphate decarboxylase from Wigglesworthia glossinidia brevipalpis.